Consider the following 719-residue polypeptide: DNA ligase (719 aa).

Residues 42–46 (DAAYD), 92–93 (SL), and Glu126 contribute to the NAD(+) site. Residue Lys128 is the N6-AMP-lysine intermediate of the active site. NAD(+)-binding residues include Arg149, Glu185, Lys301, and Lys325. Residues Cys430, Cys433, Cys448, and Cys454 each contribute to the Zn(2+) site. A BRCT domain is found at 640–719 (ATGSPVEGKT…DDWFKLVGED (80 aa)).

This sequence belongs to the NAD-dependent DNA ligase family. LigA subfamily. It depends on Mg(2+) as a cofactor. Mn(2+) serves as cofactor.

It catalyses the reaction NAD(+) + (deoxyribonucleotide)n-3'-hydroxyl + 5'-phospho-(deoxyribonucleotide)m = (deoxyribonucleotide)n+m + AMP + beta-nicotinamide D-nucleotide.. DNA ligase that catalyzes the formation of phosphodiester linkages between 5'-phosphoryl and 3'-hydroxyl groups in double-stranded DNA using NAD as a coenzyme and as the energy source for the reaction. It is essential for DNA replication and repair of damaged DNA. In Brucella ovis (strain ATCC 25840 / 63/290 / NCTC 10512), this protein is DNA ligase.